Consider the following 178-residue polypeptide: ATP synthase subunit delta (178 aa).

Belongs to the ATPase delta chain family. In terms of assembly, F-type ATPases have 2 components, F(1) - the catalytic core - and F(0) - the membrane proton channel. F(1) has five subunits: alpha(3), beta(3), gamma(1), delta(1), epsilon(1). F(0) has three main subunits: a(1), b(2) and c(10-14). The alpha and beta chains form an alternating ring which encloses part of the gamma chain. F(1) is attached to F(0) by a central stalk formed by the gamma and epsilon chains, while a peripheral stalk is formed by the delta and b chains.

The protein resides in the cell inner membrane. F(1)F(0) ATP synthase produces ATP from ADP in the presence of a proton or sodium gradient. F-type ATPases consist of two structural domains, F(1) containing the extramembraneous catalytic core and F(0) containing the membrane proton channel, linked together by a central stalk and a peripheral stalk. During catalysis, ATP synthesis in the catalytic domain of F(1) is coupled via a rotary mechanism of the central stalk subunits to proton translocation. Functionally, this protein is part of the stalk that links CF(0) to CF(1). It either transmits conformational changes from CF(0) to CF(1) or is implicated in proton conduction. The protein is ATP synthase subunit delta of Stutzerimonas stutzeri (strain A1501) (Pseudomonas stutzeri).